A 169-amino-acid polypeptide reads, in one-letter code: Deoxyuridine 5'-triphosphate nucleotidohydrolase (169 aa).

Residues 1 to 10 (MAENQINSPE) are compositionally biased toward polar residues. The segment at 1–25 (MAENQINSPEITEPSPKVQKLDHPE) is disordered. Substrate is bound by residues 91–93 (RSG), 105–108 (GVID), Gly-116, Arg-159, and 164–165 (FG).

Belongs to the dUTPase family. In terms of assembly, homodimer. Requires Mg(2+) as cofactor. Vegetative and floral merismatic cells and provascular and vascular merismatic derivatives.

It carries out the reaction dUTP + H2O = dUMP + diphosphate + H(+). Its pathway is pyrimidine metabolism; dUMP biosynthesis; dUMP from dCTP (dUTP route): step 2/2. In terms of biological role, this enzyme is involved in nucleotide metabolism: it produces dUMP, the immediate precursor of thymidine nucleotides and it decreases the intracellular concentration of dUTP so that uracil cannot be incorporated into DNA. It may have as well a metabolic role in merismatic cells. The polypeptide is Deoxyuridine 5'-triphosphate nucleotidohydrolase (Solanum lycopersicum (Tomato)).